Here is a 485-residue protein sequence, read N- to C-terminus: Probable carboxypeptidase S-like 1 (485 aa).

The signal sequence occupies residues 1–21; it reads MIFKFFFIFFLIILVIKISES. H111 is a binding site for Zn(2+). Residue D113 is part of the active site. Position 142 (D142) interacts with Zn(2+). Catalysis depends on E177, which acts as the Proton acceptor. Zn(2+) is bound by residues E178, D204, and H431.

This sequence belongs to the peptidase M20A family. The cofactor is Zn(2+).

It localises to the secreted. This chain is Probable carboxypeptidase S-like 1, found in Dictyostelium discoideum (Social amoeba).